Consider the following 652-residue polypeptide: Meiotic sister-chromatid recombination protein 3 (652 aa).

4 disordered regions span residues 123-151, 304-406, 470-576, and 594-652; these read RTGTASSRGVGSRTGSMTGSVARVGSRTG, NNSK…SDQK, EQIQ…ESGA, and ATPV…INTK. Over residues 125-141 the composition is skewed to polar residues; the sequence is GTASSRGVGSRTGSMTG. Residues 316–336 show a composition bias toward low complexity; the sequence is VQKQGVQQQQEVQHQGISQVQ. The segment covering 337 to 361 has biased composition (polar residues); sequence NTEAKSVGRKSTMSKRMTLRDTPNA. Residues 380 to 390 show a composition bias toward basic residues; it reads TKRKSIFKSKK. Polar residues-rich tracts occupy residues 506-517 and 524-544; these read QFSQENSGNQPP and QYSQQPPDVAPSNGTTDNFDT. The span at 545-569 shows a compositional bias: low complexity; that stretch reads NASGHNINHNNNNHNNNNNTSSSSS. Over residues 612–621 the composition is skewed to polar residues; it reads SSPSIDNTPR. Positions 640-652 are enriched in basic residues; that stretch reads RLFKSNKTHINTK.

Its subcellular location is the cell membrane. May be involved in the control of meiotic sister-chromatid recombination. This is Meiotic sister-chromatid recombination protein 3 (MSC3) from Kluyveromyces lactis (strain ATCC 8585 / CBS 2359 / DSM 70799 / NBRC 1267 / NRRL Y-1140 / WM37) (Yeast).